A 201-amino-acid polypeptide reads, in one-letter code: Cell division protein SepF (201 aa).

The segment covering 27 to 38 (VQERTSVQRDSR) has biased composition (basic and acidic residues). Residues 27 to 99 (VQERTSVQRD…PRVQNKDSVR (73 aa)) are disordered. A compositionally biased stretch (polar residues) spans 43 to 54 (QEASQRSHMTNS). Positions 72–81 (NRQERQRVQR) are enriched in basic and acidic residues. A compositionally biased stretch (polar residues) spans 83–92 (NAYQQATPRV).

This sequence belongs to the SepF family. Homodimer. Interacts with FtsZ.

Its subcellular location is the cytoplasm. Cell division protein that is part of the divisome complex and is recruited early to the Z-ring. Probably stimulates Z-ring formation, perhaps through the cross-linking of FtsZ protofilaments. Its function overlaps with FtsA. The protein is Cell division protein SepF of Streptococcus agalactiae serotype Ia (strain ATCC 27591 / A909 / CDC SS700).